Here is a 389-residue protein sequence, read N- to C-terminus: Lipid-A-disaccharide synthase (389 aa).

It belongs to the LpxB family.

It catalyses the reaction a lipid X + a UDP-2-N,3-O-bis[(3R)-3-hydroxyacyl]-alpha-D-glucosamine = a lipid A disaccharide + UDP + H(+). It functions in the pathway bacterial outer membrane biogenesis; LPS lipid A biosynthesis. Condensation of UDP-2,3-diacylglucosamine and 2,3-diacylglucosamine-1-phosphate to form lipid A disaccharide, a precursor of lipid A, a phosphorylated glycolipid that anchors the lipopolysaccharide to the outer membrane of the cell. This is Lipid-A-disaccharide synthase from Paraburkholderia phymatum (strain DSM 17167 / CIP 108236 / LMG 21445 / STM815) (Burkholderia phymatum).